Here is a 109-residue protein sequence, read N- to C-terminus: uncharacterized protein (109 aa).

Residues 63-109 form a disordered region; that stretch reads DPSTWEPEEHETEHCRGHTLPEKKQKPQGGHGSDKDEDKGNCGCDHC. Composition is skewed to basic and acidic residues over residues 73-87 and 94-109; these read ETEHCRGHTLPEKKQ and GSDKDEDKGNCGCDHC.

This is an uncharacterized protein from Caenorhabditis elegans.